The sequence spans 110 residues: U1-lycotoxin-Ls1kk (110 aa).

The signal sequence occupies residues Met-1–Ala-20. Positions Glu-21–Arg-44 are excised as a propeptide. 4 cysteine pairs are disulfide-bonded: Cys-47/Cys-62, Cys-54/Cys-71, Cys-61/Cys-89, and Cys-73/Cys-87.

Belongs to the neurotoxin 19 (CSTX) family. 03 subfamily. As to expression, expressed by the venom gland.

It is found in the secreted. This Lycosa singoriensis (Wolf spider) protein is U1-lycotoxin-Ls1kk.